The chain runs to 417 residues: Serine hydroxymethyltransferase (417 aa).

(6S)-5,6,7,8-tetrahydrofolate-binding positions include L121 and 125-127 (GHL). K229 bears the N6-(pyridoxal phosphate)lysine mark. 355–357 (SPF) contributes to the (6S)-5,6,7,8-tetrahydrofolate binding site.

Belongs to the SHMT family. As to quaternary structure, homodimer. Requires pyridoxal 5'-phosphate as cofactor.

The protein resides in the cytoplasm. It catalyses the reaction (6R)-5,10-methylene-5,6,7,8-tetrahydrofolate + glycine + H2O = (6S)-5,6,7,8-tetrahydrofolate + L-serine. It participates in one-carbon metabolism; tetrahydrofolate interconversion. Its pathway is amino-acid biosynthesis; glycine biosynthesis; glycine from L-serine: step 1/1. In terms of biological role, catalyzes the reversible interconversion of serine and glycine with tetrahydrofolate (THF) serving as the one-carbon carrier. This reaction serves as the major source of one-carbon groups required for the biosynthesis of purines, thymidylate, methionine, and other important biomolecules. Also exhibits THF-independent aldolase activity toward beta-hydroxyamino acids, producing glycine and aldehydes, via a retro-aldol mechanism. The chain is Serine hydroxymethyltransferase from Klebsiella pneumoniae subsp. pneumoniae (strain ATCC 700721 / MGH 78578).